The chain runs to 158 residues: Endoribonuclease YbeY (158 aa).

His119, His123, and His129 together coordinate Zn(2+).

The protein belongs to the endoribonuclease YbeY family. Zn(2+) serves as cofactor.

Its subcellular location is the cytoplasm. Single strand-specific metallo-endoribonuclease involved in late-stage 70S ribosome quality control and in maturation of the 3' terminus of the 16S rRNA. The sequence is that of Endoribonuclease YbeY from Shewanella sediminis (strain HAW-EB3).